Reading from the N-terminus, the 762-residue chain is Semaphorin-4A (762 aa).

The N-terminal stretch at methionine 1–alanine 32 is a signal peptide. Topologically, residues glycine 33–histidine 684 are extracellular. The Sema domain maps to glutamine 37–arginine 495. The cysteines at positions 114 and 125 are disulfide-linked. Residues asparagine 121 and asparagine 136 are each glycosylated (N-linked (GlcNAc...) asparagine). 3 cysteine pairs are disulfide-bonded: cysteine 143-cysteine 152, cysteine 270-cysteine 380, and cysteine 294-cysteine 340. Asparagine 314 and asparagine 497 each carry an N-linked (GlcNAc...) asparagine glycan. The PSI domain occupies asparagine 497–proline 544. 2 disulfides stabilise this stretch: cysteine 498–cysteine 515 and cysteine 507–cysteine 524. The region spanning asparagine 574–phenylalanine 632 is the Ig-like C2-type domain. N-linked (GlcNAc...) asparagine glycosylation occurs at asparagine 608. A helical membrane pass occupies residues phenylalanine 685–valine 705. Residues serine 706–alanine 762 lie on the Cytoplasmic side of the membrane. Residues threonine 722–alanine 762 form a disordered region.

The protein belongs to the semaphorin family. In terms of assembly, interacts with PLXNB1, PLXNB2, PLXNB3, PLXND1 and TIMD2.

It is found in the cell membrane. Its function is as follows. Cell surface receptor for PLXNB1, PLXNB2, PLXNB3 and PLXND1 that plays an important role in cell-cell signaling. Regulates glutamatergic and GABAergic synapse development. Promotes the development of inhibitory synapses in a PLXNB1-dependent manner and promotes the development of excitatory synapses in a PLXNB2-dependent manner. Plays a role in priming antigen-specific T-cells, promotes differentiation of Th1 T-helper cells, and thereby contributes to adaptive immunity. Promotes phosphorylation of TIMD2. Inhibits angiogenesis. Promotes axon growth cone collapse. Inhibits axonal extension by providing local signals to specify territories inaccessible for growing axons. This is Semaphorin-4A (SEMA4A) from Bos taurus (Bovine).